The following is a 258-amino-acid chain: Regulatory protein RecX (258 aa).

The protein belongs to the RecX family.

It localises to the cytoplasm. In terms of biological role, modulates RecA activity. In Streptococcus pyogenes serotype M2 (strain MGAS10270), this protein is Regulatory protein RecX.